Reading from the N-terminus, the 245-residue chain is Ribonuclease P protein component 3 (245 aa).

Belongs to the eukaryotic/archaeal RNase P protein component 3 family. Consists of a catalytic RNA component and at least 4-5 protein subunits.

The protein localises to the cytoplasm. The catalysed reaction is Endonucleolytic cleavage of RNA, removing 5'-extranucleotides from tRNA precursor.. Functionally, part of ribonuclease P, a protein complex that generates mature tRNA molecules by cleaving their 5'-ends. This Methanothermobacter thermautotrophicus (strain ATCC 29096 / DSM 1053 / JCM 10044 / NBRC 100330 / Delta H) (Methanobacterium thermoautotrophicum) protein is Ribonuclease P protein component 3.